Here is a 98-residue protein sequence, read N- to C-terminus: MRTYEVMYIVRPNIEEDAKKALVERFNGILATEGAEVLEAKDWGKRRLAYEINDFKDGFYNIVRVKSDNNKATDEFQRLAKISDDIIRYMVIREDEDK.

The protein belongs to the bacterial ribosomal protein bS6 family.

In terms of biological role, binds together with bS18 to 16S ribosomal RNA. In Staphylococcus aureus (strain NCTC 8325 / PS 47), this protein is Small ribosomal subunit protein bS6.